The chain runs to 123 residues: WAP four-disulfide core domain protein 2 (123 aa).

The first 28 residues, 1 to 28 (MPASRLVPLGAVLLLGLLLLLELPPVTG), serve as a signal peptide directing secretion. 2 consecutive WAP domains span residues 30–71 (GADK…SAIC) and 74–122 (PNEK…VTPN). Cystine bridges form between Cys37–Cys63, Cys46–Cys67, Cys50–Cys62, Cys56–Cys71, Cys81–Cys109, Cys92–Cys113, Cys96–Cys108, and Cys102–Cys118. N-linked (GlcNAc...) asparagine glycosylation is present at Asn45.

In terms of assembly, homotrimer; disulfide-linked. In terms of tissue distribution, epididymis.

It localises to the secreted. In terms of biological role, broad range protease inhibitor. The polypeptide is WAP four-disulfide core domain protein 2 (WFDC2) (Oryctolagus cuniculus (Rabbit)).